The sequence spans 391 residues: Elongation factor Tu (391 aa).

Residues 10–201 (KPHVNIGTVG…AVDEYIPTPE (192 aa)) form the tr-type G domain. Positions 19 to 26 (GHVDHGKT) are G1. 19 to 26 (GHVDHGKT) contributes to the GTP binding site. Mg(2+) is bound at residue threonine 26. A G2 region spans residues 55–59 (GITIS). The G3 stretch occupies residues 76 to 79 (DCPG). Residues 76 to 80 (DCPGH) and 131 to 134 (NKVD) contribute to the GTP site. The G4 stretch occupies residues 131–134 (NKVD). Residues 169 to 171 (SAL) form a G5 region.

It belongs to the TRAFAC class translation factor GTPase superfamily. Classic translation factor GTPase family. EF-Tu/EF-1A subfamily. As to quaternary structure, monomer.

The protein resides in the cytoplasm. The catalysed reaction is GTP + H2O = GDP + phosphate + H(+). In terms of biological role, GTP hydrolase that promotes the GTP-dependent binding of aminoacyl-tRNA to the A-site of ribosomes during protein biosynthesis. This Ruegeria sp. (strain TM1040) (Silicibacter sp.) protein is Elongation factor Tu.